Reading from the N-terminus, the 446-residue chain is Packaging protein 1 (446 aa).

The span at 1–10 (METRGRRRAF) shows a compositional bias: basic residues. A disordered region spans residues 1–74 (METRGRRRAF…PSQPPQPRSL (74 aa)). Position 170–177 (170–177 (GPTGCGKS)) interacts with ATP. The tract at residues 439–446 (RAYRKRNK) is DNA-binding.

The protein belongs to the adenoviridae packaging protein 1 family. In terms of assembly, homodimer. Part of a genome packaging complex composed of packaging proteins 1, 2 and 3; this complex specifically binds to the packaging sequence on the left end of viral genomic DNA and performs packaging of the viral genome. Interacts with protein 33K.

Its subcellular location is the virion. It localises to the host nucleus. It is found in the host nucleoplasm. The protein resides in the host nucleolus. Its function is as follows. Component of the packaging machinery which encapsidates the viral DNA into preformed capsids and transcriptional activator of the viral major late promoter (MLP). Binds, along with packaging proteins 2 and 3, to the specific packaging sequence on the left end of viral genomic DNA and displays ATPase activity thereby providing the power stroke of the packaging machinery. The activity of packaging protein IVa2 is stimulated by protein 33K which acts as a terminase. May be the protein that pumps DNA into the capsid powered by ATP hydrolysis. Specifically binds to the 5'-CG-3' nucleotides of the repeats making up the packaging sequence. Component of the DEF-A and DEF-B transcription factors that bind downstream elements of the major late promoter (MLP), and stimulate transcription from the MLP after initiation of viral DNA replication. DEF-A is a heterodimer packaging proteins 1 and 2 and DEF-B is a homodimer of packaging protein 1. This is Packaging protein 1 from Human adenovirus F serotype 40 (HAdV-40).